The following is a 540-amino-acid chain: Terminase large subunit (540 aa).

Residues Asp352, Asp424, and Asp523 each coordinate Mn(2+).

It belongs to the skunavirus terminase large subunit family. Interacts with the terminase small subunit; the active complex is probably heterooligomeric. Requires Mn(2+) as cofactor. The cofactor is Mg(2+).

In terms of biological role, the terminase large subunit acts as an ATP driven molecular motor necessary for viral DNA translocation into empty capsids and as an endonuclease that cuts the viral genome to initiate and to end a packaging reaction. The terminase lies at a unique vertex of the procapsid and is composed of two subunits, a small terminase subunit involved in viral DNA recognition (packaging sequence), and a large terminase subunit possessing endonucleolytic and ATPase activities. Both terminase subunits heterooligomerize and are docked on the portal protein to form the packaging machine. The terminase large subunit exhibits endonuclease activity and cleaves the viral genome concatemer. The polypeptide is Terminase large subunit (Lactococcus lactis (Lactococcus lactis bacteriophage SK1)).